The chain runs to 114 residues: Large ribosomal subunit protein bL19 (114 aa).

This sequence belongs to the bacterial ribosomal protein bL19 family.

Its function is as follows. This protein is located at the 30S-50S ribosomal subunit interface and may play a role in the structure and function of the aminoacyl-tRNA binding site. This is Large ribosomal subunit protein bL19 from Heliobacterium modesticaldum (strain ATCC 51547 / Ice1).